A 419-amino-acid chain; its full sequence is Serine hydroxymethyltransferase (419 aa).

(6S)-5,6,7,8-tetrahydrofolate-binding positions include leucine 121 and glycine 125–leucine 127. Lysine 229 is subject to N6-(pyridoxal phosphate)lysine. Serine 354 to phenylalanine 356 lines the (6S)-5,6,7,8-tetrahydrofolate pocket.

It belongs to the SHMT family. As to quaternary structure, homodimer. The cofactor is pyridoxal 5'-phosphate.

The protein resides in the cytoplasm. The catalysed reaction is (6R)-5,10-methylene-5,6,7,8-tetrahydrofolate + glycine + H2O = (6S)-5,6,7,8-tetrahydrofolate + L-serine. It functions in the pathway one-carbon metabolism; tetrahydrofolate interconversion. Its pathway is amino-acid biosynthesis; glycine biosynthesis; glycine from L-serine: step 1/1. Catalyzes the reversible interconversion of serine and glycine with tetrahydrofolate (THF) serving as the one-carbon carrier. This reaction serves as the major source of one-carbon groups required for the biosynthesis of purines, thymidylate, methionine, and other important biomolecules. Also exhibits THF-independent aldolase activity toward beta-hydroxyamino acids, producing glycine and aldehydes, via a retro-aldol mechanism. The sequence is that of Serine hydroxymethyltransferase from Coxiella burnetii (strain RSA 493 / Nine Mile phase I).